Consider the following 475-residue polypeptide: 3-isopropylmalate dehydratase large subunit (475 aa).

Positions 349, 409, and 412 each coordinate [4Fe-4S] cluster.

Belongs to the aconitase/IPM isomerase family. LeuC type 1 subfamily. As to quaternary structure, heterodimer of LeuC and LeuD. Requires [4Fe-4S] cluster as cofactor.

It carries out the reaction (2R,3S)-3-isopropylmalate = (2S)-2-isopropylmalate. The protein operates within amino-acid biosynthesis; L-leucine biosynthesis; L-leucine from 3-methyl-2-oxobutanoate: step 2/4. Catalyzes the isomerization between 2-isopropylmalate and 3-isopropylmalate, via the formation of 2-isopropylmaleate. In Cereibacter sphaeroides (strain ATCC 17029 / ATH 2.4.9) (Rhodobacter sphaeroides), this protein is 3-isopropylmalate dehydratase large subunit.